A 178-amino-acid polypeptide reads, in one-letter code: Small ribosomal subunit protein uS5 (178 aa).

An S5 DRBM domain is found at 13–76; the sequence is LEERVVQINR…EAAKRNLIRV (64 aa). The disordered stretch occupies residues 156–178; that stretch reads ASRRDMTPQELMERRTRRETEAA.

It belongs to the universal ribosomal protein uS5 family. Part of the 30S ribosomal subunit. Contacts proteins S4 and S8.

Its function is as follows. With S4 and S12 plays an important role in translational accuracy. In terms of biological role, located at the back of the 30S subunit body where it stabilizes the conformation of the head with respect to the body. The chain is Small ribosomal subunit protein uS5 from Chloroflexus aurantiacus (strain ATCC 29364 / DSM 637 / Y-400-fl).